A 447-amino-acid polypeptide reads, in one-letter code: MTTILKHLPVGQRIGIAFSGGLDTSAALLWMRQKGAVPYAYTANLGQPDEEDYDAIPRRAMEYGAENARLIDCRKQLVAEGIAAIQCGAFHNTTGGLTYFNTTPLGRAVTGTMLVAAMKEDGVNIWGDGSTYKGNDIERFYRYGLLTNAELQIYKPWLDTDFIDELGGRHEMSEFMIACGFDYKMSVEKAYSTDSNMLGATHEAKDLEYLNSSVKIVNPIMGVKFWDESVKIPAEEVTVRFEQGHPVALNGKTFSNDVEMMLEANRIGGRHGLGMSDQIENRIIEAKSRGIYEAPGMALLHIAYERLLTGIHNEDTIEQYHAHGRQLGRLLYQGRWFDSQALMLRDSLQRWVASQITGEVTLELRRGNDYSILNTVSENLTYKPERLTMEKGDSVFSPDDRIGQLTMRNLDITDTREKLFGYAKTGLLSSSATSGVPQVENMENKGQ.

ATP contacts are provided by residues 17–25 (AFSGGLDTS) and A43. Y99 serves as a coordination point for L-citrulline. ATP is bound by residues G129 and T131. Residues T131, N135, and D136 each contribute to the L-aspartate site. Residue N135 coordinates L-citrulline. ATP is bound at residue D136. Residues R139 and S192 each contribute to the L-citrulline site. D194 provides a ligand contact to ATP. T201, E203, and E280 together coordinate L-citrulline.

It belongs to the argininosuccinate synthase family. Type 2 subfamily. Homotetramer.

The protein localises to the cytoplasm. It carries out the reaction L-citrulline + L-aspartate + ATP = 2-(N(omega)-L-arginino)succinate + AMP + diphosphate + H(+). Its pathway is amino-acid biosynthesis; L-arginine biosynthesis; L-arginine from L-ornithine and carbamoyl phosphate: step 2/3. The sequence is that of Argininosuccinate synthase from Shigella boydii serotype 18 (strain CDC 3083-94 / BS512).